A 314-amino-acid chain; its full sequence is Tetraacyldisaccharide 4'-kinase (314 aa).

54 to 61 lines the ATP pocket; that stretch reads YIGGTGKT.

This sequence belongs to the LpxK family.

It catalyses the reaction a lipid A disaccharide + ATP = a lipid IVA + ADP + H(+). It participates in glycolipid biosynthesis; lipid IV(A) biosynthesis; lipid IV(A) from (3R)-3-hydroxytetradecanoyl-[acyl-carrier-protein] and UDP-N-acetyl-alpha-D-glucosamine: step 6/6. Transfers the gamma-phosphate of ATP to the 4'-position of a tetraacyldisaccharide 1-phosphate intermediate (termed DS-1-P) to form tetraacyldisaccharide 1,4'-bis-phosphate (lipid IVA). The sequence is that of Tetraacyldisaccharide 4'-kinase from Pelagibacter ubique (strain HTCC1062).